A 283-amino-acid chain; its full sequence is Protein canopy homolog 3 (283 aa).

Positions 1 to 35 (MEPLPEPTSRPRLRPRPRCLLLLPLLLLLLLLLPA) are cleaved as a signal peptide. The Saposin B-type domain maps to 55–276 (SKCEVCKYVA…EGIQKASPLT (222 aa)). N-linked (GlcNAc...) asparagine glycosylation occurs at N161. The stretch at 161 to 187 (NETSAEVADLKKQCDVLVEEFEEVIED) forms a coiled coil. The interval 223-283 (KGDTAALGGK…PLTHSPPDEL (61 aa)) is disordered.

Belongs to the canopy family. Interacts with HSP90B1; this interaction is disrupted in the presence of ATP. Interacts with TLR1, TLR2, TLR4 and TLR9.

The protein localises to the endoplasmic reticulum. In terms of biological role, toll-like receptor (TLR)-specific co-chaperone for HSP90B1. Required for proper TLR folding, except that of TLR3, and hence controls TLR exit from the endoplasmic reticulum. Consequently, required for both innate and adaptive immune responses. This Sus scrofa (Pig) protein is Protein canopy homolog 3 (CNPY3).